Consider the following 143-residue polypeptide: Large ribosomal subunit protein uL13 (143 aa).

Belongs to the universal ribosomal protein uL13 family. In terms of assembly, part of the 50S ribosomal subunit.

Its function is as follows. This protein is one of the early assembly proteins of the 50S ribosomal subunit, although it is not seen to bind rRNA by itself. It is important during the early stages of 50S assembly. In Coprothermobacter proteolyticus (strain ATCC 35245 / DSM 5265 / OCM 4 / BT), this protein is Large ribosomal subunit protein uL13.